The primary structure comprises 317 residues: tRNA-cytidine(32) 2-sulfurtransferase (317 aa).

Residues 1–29 (MNTANNTLPTAADWAGEDGAPDAADTRKI) form a disordered region. Residues 65–70 (SGGKDS) carry the PP-loop motif motif. Residues C140, C143, and C231 each contribute to the [4Fe-4S] cluster site.

This sequence belongs to the TtcA family. Homodimer. Mg(2+) is required as a cofactor. [4Fe-4S] cluster serves as cofactor.

The protein resides in the cytoplasm. It catalyses the reaction cytidine(32) in tRNA + S-sulfanyl-L-cysteinyl-[cysteine desulfurase] + AH2 + ATP = 2-thiocytidine(32) in tRNA + L-cysteinyl-[cysteine desulfurase] + A + AMP + diphosphate + H(+). The protein operates within tRNA modification. Catalyzes the ATP-dependent 2-thiolation of cytidine in position 32 of tRNA, to form 2-thiocytidine (s(2)C32). The sulfur atoms are provided by the cysteine/cysteine desulfurase (IscS) system. The sequence is that of tRNA-cytidine(32) 2-sulfurtransferase from Acidovorax ebreus (strain TPSY) (Diaphorobacter sp. (strain TPSY)).